We begin with the raw amino-acid sequence, 257 residues long: NH(3)-dependent NAD(+) synthetase (257 aa).

An ATP-binding site is contributed by 28–35; it reads GISGGVDS. Residue D34 participates in Mg(2+) binding. R109 is a deamido-NAD(+) binding site. Residue T129 coordinates ATP. E134 is a binding site for Mg(2+). The deamido-NAD(+) site is built by K142 and D149. The ATP site is built by K158 and S180. 240–241 is a binding site for deamido-NAD(+); the sequence is HK.

Belongs to the NAD synthetase family. As to quaternary structure, homodimer.

It carries out the reaction deamido-NAD(+) + NH4(+) + ATP = AMP + diphosphate + NAD(+) + H(+). It functions in the pathway cofactor biosynthesis; NAD(+) biosynthesis; NAD(+) from deamido-NAD(+) (ammonia route): step 1/1. Catalyzes the ATP-dependent amidation of deamido-NAD to form NAD. Uses ammonia as a nitrogen source. In Pyrococcus horikoshii (strain ATCC 700860 / DSM 12428 / JCM 9974 / NBRC 100139 / OT-3), this protein is NH(3)-dependent NAD(+) synthetase.